The sequence spans 123 residues: Fluoride-specific ion channel FluC (123 aa).

4 helical membrane-spanning segments follow: residues 5-25 (IIALLIIGGGLGALTRYYISG), 35-55 (IGTLIVNSLASFLLGYIYGLL), 67-87 (IFLGTGFCGGLSTFSTFSYET), and 100-120 (FANITTNILVTIFLVFLGFIL). Na(+) is bound by residues G75 and S78.

The protein belongs to the fluoride channel Fluc/FEX (TC 1.A.43) family.

The protein localises to the cell membrane. It carries out the reaction fluoride(in) = fluoride(out). With respect to regulation, na(+) is not transported, but it plays an essential structural role and its presence is essential for fluoride channel function. Fluoride-specific ion channel. Important for reducing fluoride concentration in the cell, thus reducing its toxicity. In Pyrococcus horikoshii (strain ATCC 700860 / DSM 12428 / JCM 9974 / NBRC 100139 / OT-3), this protein is Fluoride-specific ion channel FluC.